The following is a 54-amino-acid chain: VATVDCSDYPKPACRMEYMPLCGSDNKTYGNKCNFCNAVVDSNGTLTLSHFGKC.

Residues V4 to C54 enclose the Kazal-like domain. 3 cysteine pairs are disulfide-bonded: C6/C36, C14/C33, and C22/C54. N-linked (GlcNAc...) asparagine glycosylation is present at N43.

It localises to the secreted. In Cereopsis novaehollandiae (Cape Barren goose), this protein is Ovomucoid.